We begin with the raw amino-acid sequence, 543 residues long: Chaperonin GroEL (543 aa).

ATP is bound by residues 29 to 32 (TLGP), 86 to 90 (DGTTT), Gly413, 477 to 479 (DAL), and Asp493. The interval 524-543 (EKDKPEMPGGAPGMGMGGMY) is disordered. A compositionally biased stretch (gly residues) spans 533–543 (GAPGMGMGGMY).

Belongs to the chaperonin (HSP60) family. As to quaternary structure, forms a cylinder of 14 subunits composed of two heptameric rings stacked back-to-back. Interacts with the co-chaperonin GroES.

The protein localises to the cytoplasm. The enzyme catalyses ATP + H2O + a folded polypeptide = ADP + phosphate + an unfolded polypeptide.. Together with its co-chaperonin GroES, plays an essential role in assisting protein folding. The GroEL-GroES system forms a nano-cage that allows encapsulation of the non-native substrate proteins and provides a physical environment optimized to promote and accelerate protein folding. The protein is Chaperonin GroEL of Clostridium acetobutylicum (strain ATCC 824 / DSM 792 / JCM 1419 / IAM 19013 / LMG 5710 / NBRC 13948 / NRRL B-527 / VKM B-1787 / 2291 / W).